Here is a 486-residue protein sequence, read N- to C-terminus: Patatin-like phospholipase domain-containing protein 2 (486 aa).

Residues 1 to 8 (MFPRETKW) lie on the Cytoplasmic side of the membrane. A helical transmembrane segment spans residues 9 to 29 (NISFAGCGFLGVYHIGVASCL). The PNPLA domain occupies 10–179 (ISFAGCGFLG…SDNLPLYELK (170 aa)). A GXGXXG motif is present at residues 14 to 19 (GCGFLG). The Extracellular portion of the chain corresponds to 30-42 (REHAPFLVANATH). Residue Asn-39 is glycosylated (N-linked (GlcNAc...) asparagine). A helical transmembrane segment spans residues 43-63 (IYGASAGALTATALVTGACLG). Residues 45 to 49 (GASAG) carry the GXSXG motif. Ser-47 (nucleophile) is an active-site residue. At 64-137 (EAGANIIEVS…IISHFSSKDE (74 aa)) the chain is on the cytoplasmic side. Lys-92 is covalently cross-linked (Glycyl lysine isopeptide (Lys-Gly) (interchain with G-Cter in ubiquitin)). A helical membrane pass occupies residues 138–158 (LIQANVCSTFIPVYCGLIPPT). Topologically, residues 159–331 (LQGVRYVDGG…TTLSNMLPVR (173 aa)) are extracellular. Asp-166 functions as the Proton acceptor in the catalytic mechanism. The DGA/G signature appears at 166–168 (DGG). A helical membrane pass occupies residues 332 to 352 (LATAMMVPYTLPLESAVSFTI). Residues 353–486 (RLLEWLPDVP…PQDPPGLPPC (134 aa)) lie on the Cytoplasmic side of the membrane. Phosphoserine; in vitro is present on Ser-374. Phosphoserine; by PKA is present on residues Ser-396 and Ser-406. Ser-430 and Ser-468 each carry phosphoserine; in vitro. A compositionally biased stretch (low complexity) spans 465-476 (APASPTAADPAT). Residues 465-486 (APASPTAADPATPQDPPGLPPC) are disordered. A compositionally biased stretch (pro residues) spans 477–486 (PQDPPGLPPC).

Interacts with ABHD5; this association stimulates PNPLA2 triglyceride hydrolase activity. Interacts with SERPINF1; this interaction stimulates the phospholipase A2 activity of PNPLA2. Despite a colocalization in lipid droplets, it probably does not interact with PLIN. Interacts with PLIN5; prevents interaction with ABHD5. Interacts with FAF2. In terms of processing, phosphorylation at Ser-406 by PKA is increased during fasting and moderate intensity exercise, and moderately increases lipolytic activity. Post-translationally, ubiquitinated by PEX2 in response to reactive oxygen species (ROS), leading to its degradation. Ubiquitination is stimulated by LDAH. As to expression, expressed at high levels in white and brown adipose tissue, and to a lesser degree in testis and cardiac muscle. Barely detected in liver, spleen, thymus, kidney, skeletal muscle, and brain. Among the white adipose depots, gonadal fat showed the highest level of expression compared with inguinal and renal white adipose tissues.

The protein resides in the lipid droplet. The protein localises to the cell membrane. It localises to the cytoplasm. It carries out the reaction a triacylglycerol + H2O = a diacylglycerol + a fatty acid + H(+). It catalyses the reaction a triacylglycerol + H2O = a 1,2-diacylglycerol + a fatty acid + H(+). The enzyme catalyses a triacylglycerol + H2O = a 1,3-diacylglycerol + a fatty acid + H(+). The catalysed reaction is a triacyl-sn-glycerol + H2O = a 2,3-diacyl-sn-glycerol + a fatty acid + H(+). It carries out the reaction a triacyl-sn-glycerol + H2O = a 1,3-diacyl-sn-glycerol + a fatty acid + H(+). It catalyses the reaction 1,2,3-tri-(9Z-octadecenoyl)-glycerol + H2O = 1,3-di-(9Z-octadecenoyl)-glycerol + (9Z)-octadecenoate + H(+). The enzyme catalyses 1,2,3-tri-(9Z)-hexadecenoylglycerol + H2O = 1,3-di-(9Z)-hexadecenoylglycerol + (9Z)-hexadecenoate + H(+). The catalysed reaction is 1,2,3-tri-(9Z,12Z)-octadecadienoylglycerol + H2O = 1,3-di-(9Z,12Z)-octadecadienoylglycerol + (9Z,12Z)-octadecadienoate + H(+). It carries out the reaction 1,2,3-tri-(9Z,12Z,15Z)-octadecatrienoylglycerol + H2O = 1,3-di-(9Z,12Z,15Z)-octadecatrienoylglycerol + (9Z,12Z,15Z)-octadecatrienoate + H(+). It catalyses the reaction 1,3-di-(9Z)-octadecenoyl-2-hexadecanoylglycerol + H2O = 1,3-di-(9Z-octadecenoyl)-glycerol + hexadecanoate + H(+). The enzyme catalyses 1,2-di-(9Z)-octadecenoyl-3-hexadecanoyl-sn-glycerol + H2O = 1-(9Z)-octadecenoyl-3-hexadecanoyl-sn-glycerol + (9Z)-octadecenoate + H(+). The catalysed reaction is 1-hexadecanoyl-2,3-di-(9Z)-octadecenoyl-sn-glycerol + H2O = 1-hexadecanoyl-3-(9Z)-octadecenoyl-sn-glycerol + (9Z)-octadecenoate + H(+). It carries out the reaction 1,2,3-tri-(9Z-octadecenoyl)-glycerol + H2O = 2,3-di-(9Z)-octadecenoyl-sn-glycerol + (9Z)-octadecenoate + H(+). It catalyses the reaction 1,2,3-tri-(9Z)-hexadecenoylglycerol + H2O = 2,3-di-(9Z)-hexadecenoyl-sn-glycerol + (9Z)-hexadecenoate + H(+). The enzyme catalyses 1,2,3-tri-(9Z,12Z)-octadecadienoylglycerol + H2O = 2,3-di-(9Z,12Z)-octadecadienoyl-sn-glycerol + (9Z,12Z)-octadecadienoate + H(+). The catalysed reaction is 1,2,3-tri-(9Z,12Z,15Z)-octadecatrienoylglycerol + H2O = 2,3-di-(9Z,12Z,15Z)-octadecatrienoyl-sn-glycerol + (9Z,12Z,15Z)-octadecatrienoate + H(+). It carries out the reaction 1,3-di-(9Z)-octadecenoyl-2-hexadecanoylglycerol + H2O = 2-hexadecanoyl-3-(9Z)-octadecenoyl-sn-glycerol + (9Z)-octadecenoate + H(+). It catalyses the reaction 1-hexadecanoyl-2,3-di-(9Z)-octadecenoyl-sn-glycerol + H2O = 2,3-di-(9Z)-octadecenoyl-sn-glycerol + hexadecanoate + H(+). The enzyme catalyses 1,2-di-(9Z)-octadecenoyl-3-hexadecanoyl-sn-glycerol + H2O = 2-(9Z-octadecenoyl)-3-hexadecanoyl-sn-glycerol + (9Z)-octadecenoate + H(+). The catalysed reaction is 1,2-di-(9Z-octadecenoyl)-glycerol + (9Z)-octadecenoate + H(+) = 1,2,3-tri-(9Z-octadecenoyl)-glycerol + H2O. It carries out the reaction a 1-acylglycerol + a 1,3-diacylglycerol = a triacylglycerol + glycerol. It catalyses the reaction a 1-acylglycerol + a 1,2-diacylglycerol = a triacylglycerol + glycerol. The enzyme catalyses 2 a 1-acylglycerol = a 1,2-diacylglycerol + glycerol. The catalysed reaction is a triacylglycerol + all-trans-retinol = an all-trans-retinyl ester + a diacylglycerol. It carries out the reaction 1-(9Z-octadecenoyl)-glycerol + 1,3-di-(9Z-octadecenoyl)-glycerol = 1,2,3-tri-(9Z-octadecenoyl)-glycerol + glycerol. It catalyses the reaction 1-(9Z-octadecenoyl)-glycerol + 1,2-di-(9Z-octadecenoyl)-glycerol = 1,2,3-tri-(9Z-octadecenoyl)-glycerol + glycerol. The enzyme catalyses 2 1-(9Z-octadecenoyl)-glycerol = 1,2-di-(9Z-octadecenoyl)-glycerol + glycerol. The catalysed reaction is 1,2,3-tri-(9Z-octadecenoyl)-glycerol + all-trans-retinol = all-trans-retinyl 9Z-octadecenoate + di-(9Z)-octadecenoylglycerol. It carries out the reaction a 1,2-diacyl-sn-glycero-3-phosphocholine + H2O = a 1-acyl-sn-glycero-3-phosphocholine + a fatty acid + H(+). It catalyses the reaction 1,2,3-tri-(9Z-octadecenoyl)-glycerol + 9-hydroxy-octadecanoate = 9-(9Z-octadecenoyloxy)-octadecanoate + 2,3-di-(9Z)-octadecenoyl-sn-glycerol. The enzyme catalyses 1-hexadecanoyl-2,3-di-(9Z)-octadecenoyl-sn-glycerol + 9-hydroxy-octadecanoate = 9-hexadecanoyloxy-octadecanoate + 2,3-di-(9Z)-octadecenoyl-sn-glycerol. The catalysed reaction is 1,2,3-tri-(10Z)-heptadecenoylglycerol + 9-hydroxy-octadecanoate = 2,3-di-(10Z-heptadecenoyl)-sn-glycerol + 9-(10Z-heptadecenoyloxy)-octadecanoate. It carries out the reaction 1,2,3-tri-(9Z,12Z)-octadecadienoylglycerol + 9-hydroxy-octadecanoate = 2,3-di-(9Z,12Z)-octadecadienoyl-sn-glycerol + 9-(9Z,12Z-octadecadienoyloxy)-octadecanoate. It catalyses the reaction 1,2,3-tri-(9Z)-hexadecenoylglycerol + 9-hydroxy-octadecanoate = 2,3-di-(9Z)-hexadecenoyl-sn-glycerol + 9-(9Z-hexadecenoyloxy)-octadecanoate. The enzyme catalyses 9-hydroxy-octadecanoate + 1,2-di-(9Z-octadecenoyl)-sn-glycerol = 9-(9Z-octadecenoyloxy)-octadecanoate + 2-(9Z-octadecenoyl)-glycerol. The catalysed reaction is 1-hexadecanoyl-2,3-di-(9Z)-octadecenoyl-sn-glycerol + 9-hydroxy-octadecanoate = 1-hexadecanoyl-3-(9Z)-octadecenoyl-sn-glycerol + 9-(9Z-octadecenoyloxy)-octadecanoate. The protein operates within glycerolipid metabolism; triacylglycerol degradation. Stimulated by PKA-dependent PLIN phosphorylation. Catalyzes the initial step in triglyceride hydrolysis in adipocyte and non-adipocyte lipid droplets. Exhibits a strong preference for the hydrolysis of long-chain fatty acid esters at the sn-2 position of the glycerol backbone and acts coordinately with LIPE/HLS and DGAT2 within the lipolytic cascade. Also possesses acylglycerol transacylase and phospholipase A2 activities. Transfers fatty acid from triglyceride to retinol, hydrolyzes retinylesters, and generates 1,3-diacylglycerol from triglycerides. Regulates adiposome size and may be involved in the degradation of adiposomes. Catalyzes the formation of an ester bond between hydroxy fatty acids and fatty acids derived from triglycerides or diglycerides to generate fatty acid esters of hydroxy fatty acids (FAHFAs) in adipocytes. Acts antagonistically with LDAH in regulation of cellular lipid stores. Inhibits LDAH-stimulated lipid droplet fusion. May play an important role in energy homeostasis. May play a role in the response of the organism to starvation, enhancing hydrolysis of triglycerides and providing free fatty acids to other tissues to be oxidized in situations of energy depletion. The polypeptide is Patatin-like phospholipase domain-containing protein 2 (Mus musculus (Mouse)).